The chain runs to 89 residues: Small ribosomal subunit protein uS15 (89 aa).

It belongs to the universal ribosomal protein uS15 family. As to quaternary structure, part of the 30S ribosomal subunit. Forms a bridge to the 50S subunit in the 70S ribosome, contacting the 23S rRNA.

One of the primary rRNA binding proteins, it binds directly to 16S rRNA where it helps nucleate assembly of the platform of the 30S subunit by binding and bridging several RNA helices of the 16S rRNA. In terms of biological role, forms an intersubunit bridge (bridge B4) with the 23S rRNA of the 50S subunit in the ribosome. The sequence is that of Small ribosomal subunit protein uS15 from Burkholderia ambifaria (strain MC40-6).